The sequence spans 480 residues: Phenolic acid decarboxylase (480 aa).

Mn(2+)-binding residues include Asn-163, His-185, and Glu-227. Prenylated FMN-binding positions include 163–168 (NVGTYR) and 184–185 (MH). Glu-278 (proton donor) is an active-site residue. Residues 443 to 466 (TTPVPPEPNPRETQLLDPPDGTEE) form a disordered region.

This sequence belongs to the UbiD family. YclC subfamily. In terms of assembly, homohexamer. Prenylated FMN serves as cofactor. Mn(2+) is required as a cofactor.

It catalyses the reaction 4-hydroxybenzoate + H(+) = phenol + CO2. The catalysed reaction is 3,4-dihydroxybenzoate + H(+) = catechol + CO2. With respect to regulation, inhibited by Zn(2+), (2,3,4)-trihydroxybenzoate and (3,4,5)-trihydroxybenzoate. Ammonium and rubidium ions decrease the activity of the carboxylation of 3,4-dihydroxybenzoate by about 20%. Involved in the non-oxidative decarboxylation and detoxification of phenolic derivatives under anaerobic conditions. Oxygen-sensitive phenolic acid decarboxylase that catalyzes the reversible decarboxylation of 4-hydroxybenzoate and 3,4-dihydroxybenzoate. The sequence is that of Phenolic acid decarboxylase from Sedimentibacter hydroxybenzoicus (Clostridium hydroxybenzoicum).